The primary structure comprises 170 residues: Copper transporter 1 (170 aa).

The tract at residues 1 to 29 is disordered; the sequence is MDHDHMHGMPRPSSSSSSSPSSMMNNGSM. Over residues 9–29 the composition is skewed to low complexity; the sequence is MPRPSSSSSSSPSSMMNNGSM. The next 2 membrane-spanning stretches (helical) occupy residues 65 to 85 and 114 to 134; these read GMYA…EWLA and IGLA…VFLV.

This sequence belongs to the copper transporter (Ctr) (TC 1.A.56) family. SLC31A subfamily. In terms of tissue distribution, expressed in the root apex, lateral root primordia, embryo, trichomes, guard cells and pollen grains.

The protein localises to the membrane. In terms of biological role, copper transporter involved in copper acquisition and transport in leaves. Required for copper homeostasis and normal plant growth and development. The chain is Copper transporter 1 (COPT1) from Arabidopsis thaliana (Mouse-ear cress).